The sequence spans 172 residues: uncharacterized protein (172 aa).

It belongs to the flavoredoxin family. FMN is required as a cofactor.

This is an uncharacterized protein from Pyrococcus horikoshii (strain ATCC 700860 / DSM 12428 / JCM 9974 / NBRC 100139 / OT-3).